A 326-amino-acid chain; its full sequence is DnaJ homolog subfamily B member 6 (326 aa).

In terms of domain architecture, J spans 3 to 69 (DYYEVLGVQK…KKRDIYDRFG (67 aa)). The interval 249–326 (ALPFQPTNTR…KKKKSTKGSY (78 aa)) is disordered. Position 277 is a phosphoserine (S277).

Homooligomer.

The protein resides in the cytoplasm. It is found in the perinuclear region. The protein localises to the nucleus. Has a stimulatory effect on the ATPase activity of HSP70 in a dose-dependent and time-dependent manner and hence acts as a co-chaperone of HSP70. Plays an indispensable role in the organization of KRT8/KRT18 filaments. Acts as an endogenous molecular chaperone for neuronal proteins including huntingtin. Suppresses aggregation and toxicity of polyglutamine-containing, aggregation-prone proteins. Also reduces cellular toxicity and caspase-3 activity. The sequence is that of DnaJ homolog subfamily B member 6 from Gallus gallus (Chicken).